Here is a 255-residue protein sequence, read N- to C-terminus: MSGHSKWATTKHKKAIIDSRRAKSFAKLIKNIEVAAKIGGADMSGNPTLVDAVQKAKKTSVPNDNIDRAVKRGAGLLGEVVDYQTIMYEGYAANGVAMLVECLTDNKNRAAAEVRTAMSRNGGTMADPGSVAYNFHRKGVIAVPHADAPTEDDVLAAVLDAGAEDVTDHGEVFEIRCEPSDMVGVRQALQEAGIDYDSADVEFVPQVKVEVDLETARKVNKLVDAMEDLDDVQNIYVNSDVPADVQAALDDDDEE.

The protein belongs to the TACO1 family.

The protein resides in the cytoplasm. The chain is Probable transcriptional regulatory protein CMS0715 from Clavibacter sepedonicus (Clavibacter michiganensis subsp. sepedonicus).